The primary structure comprises 1247 residues: DNA-directed RNA polymerase subunit beta (1247 aa).

It belongs to the RNA polymerase beta chain family. In plastids the minimal PEP RNA polymerase catalytic core is composed of four subunits: alpha, beta, beta', and beta''. When a (nuclear-encoded) sigma factor is associated with the core the holoenzyme is formed, which can initiate transcription.

It is found in the plastid. It carries out the reaction RNA(n) + a ribonucleoside 5'-triphosphate = RNA(n+1) + diphosphate. Functionally, DNA-dependent RNA polymerase catalyzes the transcription of DNA into RNA using the four ribonucleoside triphosphates as substrates. The polypeptide is DNA-directed RNA polymerase subunit beta (rpoB) (Helicosporidium sp. subsp. Simulium jonesii (Green alga)).